Reading from the N-terminus, the 285-residue chain is Acetyl-coenzyme A carboxylase carboxyl transferase subunit beta (285 aa).

The CoA carboxyltransferase N-terminal domain occupies 23-285 (VFRRCDGCSH…HLTAGRRARR (263 aa)). 4 residues coordinate Zn(2+): Cys27, Cys30, Cys46, and Cys49. A C4-type zinc finger spans residues 27–49 (CDGCSHTHDAAELARTFEVCSQC).

This sequence belongs to the AccD/PCCB family. In terms of assembly, acetyl-CoA carboxylase is a heterohexamer composed of biotin carboxyl carrier protein (AccB), biotin carboxylase (AccC) and two subunits each of ACCase subunit alpha (AccA) and ACCase subunit beta (AccD). The cofactor is Zn(2+).

Its subcellular location is the cytoplasm. The catalysed reaction is N(6)-carboxybiotinyl-L-lysyl-[protein] + acetyl-CoA = N(6)-biotinyl-L-lysyl-[protein] + malonyl-CoA. It participates in lipid metabolism; malonyl-CoA biosynthesis; malonyl-CoA from acetyl-CoA: step 1/1. In terms of biological role, component of the acetyl coenzyme A carboxylase (ACC) complex. Biotin carboxylase (BC) catalyzes the carboxylation of biotin on its carrier protein (BCCP) and then the CO(2) group is transferred by the transcarboxylase to acetyl-CoA to form malonyl-CoA. This chain is Acetyl-coenzyme A carboxylase carboxyl transferase subunit beta, found in Sorangium cellulosum (strain So ce56) (Polyangium cellulosum (strain So ce56)).